Reading from the N-terminus, the 596-residue chain is DNA primase (596 aa).

The CHC2-type zinc-finger motif lies at 41 to 65 (CPFHHEKTPSFSVSQDKQIYKCFGC). Positions 255-336 (DTIIIVEGYM…DIKIIKIPDG (82 aa)) constitute a Toprim domain. 3 residues coordinate Mg(2+): Glu261, Asp305, and Asp307.

The protein belongs to the DnaG primase family. Monomer. Interacts with DnaB. The cofactor is Zn(2+). Mg(2+) is required as a cofactor.

It catalyses the reaction ssDNA + n NTP = ssDNA/pppN(pN)n-1 hybrid + (n-1) diphosphate.. Its function is as follows. RNA polymerase that catalyzes the synthesis of short RNA molecules used as primers for DNA polymerase during DNA replication. The sequence is that of DNA primase from Clostridium acetobutylicum (strain ATCC 824 / DSM 792 / JCM 1419 / IAM 19013 / LMG 5710 / NBRC 13948 / NRRL B-527 / VKM B-1787 / 2291 / W).